We begin with the raw amino-acid sequence, 311 residues long: tRNA dimethylallyltransferase (311 aa).

12–19 (GPTASGKT) contacts ATP. A substrate-binding site is contributed by 14–19 (TASGKT). 2 interaction with substrate tRNA regions span residues 37–40 (DSAM) and 161–165 (QRIQR).

Belongs to the IPP transferase family. As to quaternary structure, monomer. Requires Mg(2+) as cofactor.

It catalyses the reaction adenosine(37) in tRNA + dimethylallyl diphosphate = N(6)-dimethylallyladenosine(37) in tRNA + diphosphate. Its function is as follows. Catalyzes the transfer of a dimethylallyl group onto the adenine at position 37 in tRNAs that read codons beginning with uridine, leading to the formation of N6-(dimethylallyl)adenosine (i(6)A). The polypeptide is tRNA dimethylallyltransferase (Coxiella burnetii (strain RSA 331 / Henzerling II)).